The primary structure comprises 305 residues: uncharacterized protein (305 aa).

The interval 53–185 (SGRIGDGDDG…TGPRSSRTVG (133 aa)) is disordered. Composition is skewed to basic and acidic residues over residues 95–116 (VEER…ERPT) and 128–142 (GSER…RSEG). Over residues 161–171 (GNTQAPSQSAE) the composition is skewed to polar residues. Residues 260-302 (CAICMSNFIKNQRLRVLPCDHRFHVGCVDKWLLGHSNKCPVCR) form an RING-type; atypical zinc finger.

This is an uncharacterized protein from Encephalitozoon cuniculi (strain GB-M1) (Microsporidian parasite).